Reading from the N-terminus, the 220-residue chain is Elongation factor Ts (220 aa).

Positions threonine 83 to valine 86 are involved in Mg(2+) ion dislocation from EF-Tu.

This sequence belongs to the EF-Ts family.

It is found in the cytoplasm. Functionally, associates with the EF-Tu.GDP complex and induces the exchange of GDP to GTP. It remains bound to the aminoacyl-tRNA.EF-Tu.GTP complex up to the GTP hydrolysis stage on the ribosome. The sequence is that of Elongation factor Ts from Synechococcus sp. (strain CC9605).